A 243-amino-acid chain; its full sequence is 2-C-methyl-D-erythritol 4-phosphate cytidylyltransferase (243 aa).

It belongs to the IspD/TarI cytidylyltransferase family. IspD subfamily.

It carries out the reaction 2-C-methyl-D-erythritol 4-phosphate + CTP + H(+) = 4-CDP-2-C-methyl-D-erythritol + diphosphate. It participates in isoprenoid biosynthesis; isopentenyl diphosphate biosynthesis via DXP pathway; isopentenyl diphosphate from 1-deoxy-D-xylulose 5-phosphate: step 2/6. In terms of biological role, catalyzes the formation of 4-diphosphocytidyl-2-C-methyl-D-erythritol from CTP and 2-C-methyl-D-erythritol 4-phosphate (MEP). The sequence is that of 2-C-methyl-D-erythritol 4-phosphate cytidylyltransferase from Colwellia psychrerythraea (strain 34H / ATCC BAA-681) (Vibrio psychroerythus).